Consider the following 307-residue polypeptide: Methionyl-tRNA formyltransferase (307 aa).

Residue 108–111 (SLLP) participates in (6S)-5,6,7,8-tetrahydrofolate binding.

Belongs to the Fmt family.

It carries out the reaction L-methionyl-tRNA(fMet) + (6R)-10-formyltetrahydrofolate = N-formyl-L-methionyl-tRNA(fMet) + (6S)-5,6,7,8-tetrahydrofolate + H(+). Its function is as follows. Attaches a formyl group to the free amino group of methionyl-tRNA(fMet). The formyl group appears to play a dual role in the initiator identity of N-formylmethionyl-tRNA by promoting its recognition by IF2 and preventing the misappropriation of this tRNA by the elongation apparatus. This is Methionyl-tRNA formyltransferase from Stenotrophomonas maltophilia (strain K279a).